Here is a 538-residue protein sequence, read N- to C-terminus: Protein phosphatase EYA2 (538 aa).

The span at 209–230 shows a compositional bias: polar residues; that stretch reads HNVPNQSSESLAGEYNTHNGPS. The disordered stretch occupies residues 209 to 263; that stretch reads HNVPNQSSESLAGEYNTHNGPSTPAKEGDTDRPHRASDGKLRGRSKRSSDPSPAG. A compositionally biased stretch (basic and acidic residues) spans 234–249; sequence KEGDTDRPHRASDGKL. The active-site Nucleophile is the Asp-274. Mg(2+) contacts are provided by Asp-274, Asp-276, and Asp-502. The Proton donor role is filled by Asp-276.

The protein belongs to the HAD-like hydrolase superfamily. EYA family. In terms of assembly, interacts with DACH2 and SIX1, and probably with SIX2, SIX4 and SIX5. Interacts with CAPN8. Interacts with GNAZ and GNAI2; this precludes interaction with SIX1. Requires Mg(2+) as cofactor. In terms of tissue distribution, highest expression in muscle with lower levels in kidney, placenta, pancreas, brain and heart.

The protein resides in the cytoplasm. Its subcellular location is the nucleus. It carries out the reaction O-phospho-L-tyrosyl-[protein] + H2O = L-tyrosyl-[protein] + phosphate. Functions both as protein phosphatase and as transcriptional coactivator for SIX1, and probably also for SIX2, SIX4 and SIX5. Tyrosine phosphatase that dephosphorylates 'Tyr-142' of histone H2AX (H2AXY142ph) and promotes efficient DNA repair via the recruitment of DNA repair complexes containing MDC1. 'Tyr-142' phosphorylation of histone H2AX plays a central role in DNA repair and acts as a mark that distinguishes between apoptotic and repair responses to genotoxic stress. Its function as histone phosphatase may contribute to its function in transcription regulation during organogenesis. Plays an important role in hypaxial muscle development together with SIX1 and DACH2; in this it is functionally redundant with EYA1. This chain is Protein phosphatase EYA2 (EYA2), found in Homo sapiens (Human).